Consider the following 558-residue polypeptide: Formate--tetrahydrofolate ligase (558 aa).

T67 to T74 lines the ATP pocket.

It belongs to the formate--tetrahydrofolate ligase family.

It catalyses the reaction (6S)-5,6,7,8-tetrahydrofolate + formate + ATP = (6R)-10-formyltetrahydrofolate + ADP + phosphate. It participates in one-carbon metabolism; tetrahydrofolate interconversion. The chain is Formate--tetrahydrofolate ligase from Ruegeria pomeroyi (strain ATCC 700808 / DSM 15171 / DSS-3) (Silicibacter pomeroyi).